We begin with the raw amino-acid sequence, 290 residues long: Beta-lactamase OXY-2 (290 aa).

The first 27 residues, 1–27 (MIKSSWRKIAMLAAAVPLLLASGALWA), serve as a signal peptide directing secretion. The Acyl-ester intermediate role is filled by serine 72. A substrate-binding site is contributed by 236–238 (KTG).

This sequence belongs to the class-A beta-lactamase family.

The catalysed reaction is a beta-lactam + H2O = a substituted beta-amino acid. Its function is as follows. Hydrolyzes broad-spectrum beta-lactam antibiotics. Active against all third-generation cephalosporins but ceftazidime. This is Beta-lactamase OXY-2 (bla) from Klebsiella oxytoca.